We begin with the raw amino-acid sequence, 147 residues long: MPPPQKIPSVRPFKQRKSLAIRQEEVAGIRAKFPNKIPVVVERYPRETFLPPLDKTKFLVPQELTMTQFLSIIRSRMVLRATEAFYLLVNNKSLVSMSATMAEIYRDYKDEDGFVYMTYASQETFGCLESAAPRDGSSLEDRPCNPL.

Phosphoserine; by TBK1 is present on residues Ser-93 and Ser-96. Gly-126 carries the Phosphatidylethanolamine amidated glycine; alternate lipid modification. A lipid anchor (Phosphatidylserine amidated glycine; alternate) is attached at Gly-126. Residues 127 to 147 constitute a propeptide, removed in mature form; the sequence is CLESAAPRDGSSLEDRPCNPL.

Belongs to the ATG8 family. In terms of assembly, 3 different light chains, LC1 (a cleavage product of MAP1B), LC2 (a cleavage product of MAP1A) and LC3 (produced by one of the MAP1LC3 genes), can associate with the MAP1A or MAP1B heavy chains. Interacts with TP53INP1 and TP53INP2. Interacts with CALCOCO2. Interacts with TECPR2. Interacts with TBC1D5. Found in a complex with UBQLN1 and UBQLN2. Interacts with UBQLN4 (via STI1 1 and 2 domains). Interacts with UBQLN1 in the presence of UBQLN4. Interacts with TRIM5. Interacts with ATG13. Interacts with MEFV and TRIM21. Interacts with WDR81; recruits MAP1LC3C to ubiquitinated protein aggregates in the aggrephagy process. Interacts with MOAP1 (via LIR motif). Interacts with reticulophagy regulators RETREG1, RETREG2 and RETREG3. Interacts with TAX1BP1. Interacts with IRGM. Interacts with SPART. Post-translationally, the precursor molecule is cleaved by ATG4 (ATG4A, ATG4B, ATG4C or ATG4D) to expose the glycine at the C-terminus and form the cytosolic form, LC3-I. The processed form is then activated by APG7L/ATG7, transferred to ATG3 and conjugated to phosphatidylethanolamine (PE) phospholipid to form the membrane-bound form, LC3-II. During non-canonical autophagy, the processed form is conjugated to phosphatidylserine (PS) phospholipid. ATG4 proteins also mediate the delipidation of PE-conjugated forms. In addition, ATG4B and ATG4D mediate delipidation of ATG8 proteins conjugated to PS during non-canonical autophagy. In terms of processing, (Microbial infection) The Legionella effector RavZ is a deconjugating enzyme that hydrolyzes the amide bond between the C-terminal glycine residue and an adjacent aromatic residue in ATG8 proteins conjugated to phosphatidylethanolamine (PE), producing an ATG8 protein that is resistant to reconjugation by the host machinery due to the cleavage of the reactive C-terminal glycine. RavZ is also able to mediate delipidation of ATG8 proteins conjugated to phosphatidylserine (PS). Phosphorylation at Ser-96 and Ser-98 by TBK1 prevents interaction with ATG4 (ATG4A, ATG4B, ATG4C or ATG4D). Phosphorylation by TBK1 on autophagosomes prevents their delipidation by ATG4 and premature removal from nascent autophagosomes. As to expression, most abundant in placenta, lung and ovary.

The protein localises to the cytoplasmic vesicle. Its subcellular location is the autophagosome membrane. The protein resides in the endomembrane system. It is found in the cytoplasm. It localises to the cytoskeleton. Ubiquitin-like modifier that plays a crucial role in antibacterial autophagy (xenophagy) through the selective binding of CALCOCO2. Recruits all ATG8 family members to infecting bacteria such as S.typhimurium. May also play a role in aggrephagy, the macroautophagic degradation of ubiquitinated and aggregated proteins. This chain is Microtubule-associated protein 1 light chain 3 gamma (MAP1LC3C), found in Homo sapiens (Human).